The following is a 1030-amino-acid chain: Kinesin-related protein 6 (1030 aa).

The 64-residue stretch at 3–66 folds into the SAM domain; it reads FENDQLYNWL…FHLLQQLKKQ (64 aa). Disordered regions lie at residues 66-164 and 178-308; these read QTPP…SDFM and RQQY…EDDD. Polar residues predominate over residues 68–80; that stretch reads PPISNTSSPVINS. Composition is skewed to low complexity over residues 81–117, 125–164, 181–197, and 225–238; these read NNNN…NNNN, TSTS…SDFM, YAKQ…KYQS, and QQQQ…QQQD. Positions 239-290 are enriched in acidic residues; it reads FEFEEEEEEEDQQQQYDEEEEEEEEYEEDFYKEDLGEIDDGNVLDISDDEPD. The Kinesin motor domain occupies 453-775; sequence RIRVCVRKRP…LRYADRVKEL (323 aa). Position 543-550 (543-550) interacts with ATP; it reads GQTGSGKT. Low complexity-rich tracts occupy residues 826–839, 849–906, and 981–1009; these read INSQ…TSQP, QQQE…QTQP, and PIQQ…QTPQ. Disordered stretches follow at residues 826–915 and 981–1030; these read INSQ…KIDF and PIQQ…SSRN.

It belongs to the TRAFAC class myosin-kinesin ATPase superfamily. Kinesin family.

The protein resides in the cytoplasm. The protein localises to the cytoskeleton. Functionally, microtubule-associated force-producing protein that plays a role in organelle transport. Its motor activity is directed toward the microtubule's plus end. The polypeptide is Kinesin-related protein 6 (kif6) (Dictyostelium discoideum (Social amoeba)).